Here is a 207-residue protein sequence, read N- to C-terminus: Ribosomal RNA small subunit methyltransferase G (207 aa).

Residues Gly-73, Leu-78, 124–125, and Arg-139 each bind S-adenosyl-L-methionine; that span reads VE.

The protein belongs to the methyltransferase superfamily. RNA methyltransferase RsmG family.

It localises to the cytoplasm. It catalyses the reaction guanosine(527) in 16S rRNA + S-adenosyl-L-methionine = N(7)-methylguanosine(527) in 16S rRNA + S-adenosyl-L-homocysteine. Functionally, specifically methylates the N7 position of guanine in position 527 of 16S rRNA. The sequence is that of Ribosomal RNA small subunit methyltransferase G from Cronobacter sakazakii (strain ATCC BAA-894) (Enterobacter sakazakii).